Reading from the N-terminus, the 309-residue chain is Glutaminase (309 aa).

The substrate site is built by S65, N117, E162, N169, Y193, Y245, and V263.

The protein belongs to the glutaminase family. In terms of assembly, homotetramer.

It carries out the reaction L-glutamine + H2O = L-glutamate + NH4(+). The chain is Glutaminase from Clostridioides difficile (strain 630) (Peptoclostridium difficile).